We begin with the raw amino-acid sequence, 1719 residues long: 5'-3' exoribonuclease 1 (1719 aa).

The span at 1268–1298 (HKSGFTDHSVRHQQRKHDSQRKFKEEYKSPK) shows a compositional bias: basic and acidic residues. Residues 1268 to 1317 (HKSGFTDHSVRHQQRKHDSQRKFKEEYKSPKAECQSQKLSSKQTSGGSAR) are disordered. The span at 1301–1314 (CQSQKLSSKQTSGG) shows a compositional bias: polar residues. Phosphoserine is present on Ser-1382. The span at 1397-1430 (ILKIDSPDTRDSKNDMKKSDNEATVSSRRDERGV) shows a compositional bias: basic and acidic residues. 2 disordered regions span residues 1397–1445 (ILKI…KPHG) and 1634–1719 (ENKE…KPSE). Residues 1638 to 1660 (AQSSQATPLQTNKPGSSEATKMT) are compositionally biased toward polar residues. The segment covering 1661–1680 (PQESPPASSSSSQAAQPVSS) has biased composition (low complexity). A compositionally biased stretch (polar residues) spans 1681-1690 (HVETASQGHV).

Belongs to the 5'-3' exonuclease family. In terms of assembly, found in a mRNP complex with UPF1, UPF2, UPF3B and XRN1. Associates with alpha and beta tubulins. Interacts with DIS3L2. Interacts with ZC3HAV1 in an RNA-dependent manner. Interacts with ZFP36L1. Interacts with TRIM71 (via NHL repeats) in an RNA-dependent manner. Interacts with YTHDC2 (via ANK repeats). Interacts with DHX34; the interaction is RNA-independent. As to expression, expressed in heart, brain (spinal cord, dorsal root and superior cervical ganglia, neurons of the cerebrum and brain stem), peripheral nerve fibers in the skin and intestine, spleen, lung, liver, skeletal muscle, kidney and testis.

It is found in the cytoplasm. Functionally, major 5'-3' exoribonuclease involved in mRNA decay. Required for the 5'-3'-processing of the G4 tetraplex-containing DNA and RNA substrates. The kinetic of hydrolysis is faster for G4 RNA tetraplex than for G4 DNA tetraplex and monomeric RNA tetraplex. Binds to RNA and DNA. Plays a role in replication-dependent histone mRNA degradation. The sequence is that of 5'-3' exoribonuclease 1 from Mus musculus (Mouse).